An 896-amino-acid polypeptide reads, in one-letter code: DNA mismatch repair protein MutS (896 aa).

607–614 (GPNMSGKS) serves as a coordination point for ATP. The segment at 809-835 (ANSVAPNTAASMPVEAADESQPVESET) is disordered.

The protein belongs to the DNA mismatch repair MutS family.

This protein is involved in the repair of mismatches in DNA. It is possible that it carries out the mismatch recognition step. This protein has a weak ATPase activity. The protein is DNA mismatch repair protein MutS of Lactiplantibacillus plantarum (strain ATCC BAA-793 / NCIMB 8826 / WCFS1) (Lactobacillus plantarum).